Here is a 101-residue protein sequence, read N- to C-terminus: Immunity protein CdiI-2 (101 aa).

In terms of assembly, specifically interacts with the truncated CT fragment of cognate toxin protein CdiA-2, which inhibits CdiA-2 tRNA nuclease activity.

Functionally, immunity protein component of a toxin-immunity protein module, which functions as a cellular contact-dependent growth inhibition (CDI) system. CDI modules allow bacteria to communicate with and inhibit the growth of closely related neighboring bacteria in a contact-dependent fashion. Neutralizes the toxic activity of cognate toxin CdiA (C-terminal 301 residue CT fragment) upon expression in E.coli. Does not inhibit toxic activity of CdiA from other strains of B.pseudomallei. In terms of biological role, expression of this cdiAIB locus in B.thailandensis confers protection against other bacteria carrying the locus; growth inhibition requires cellular contact. This Burkholderia pseudomallei (strain 1026b) protein is Immunity protein CdiI-2 (cdiI2).